The sequence spans 181 residues: Crossover junction endodeoxyribonuclease RuvC (181 aa).

Active-site residues include Asp7, Glu67, and Asp139. Mg(2+) is bound by residues Asp7, Glu67, and Asp139.

The protein belongs to the RuvC family. Homodimer which binds Holliday junction (HJ) DNA. The HJ becomes 2-fold symmetrical on binding to RuvC with unstacked arms; it has a different conformation from HJ DNA in complex with RuvA. In the full resolvosome a probable DNA-RuvA(4)-RuvB(12)-RuvC(2) complex forms which resolves the HJ. Mg(2+) is required as a cofactor.

The protein resides in the cytoplasm. The catalysed reaction is Endonucleolytic cleavage at a junction such as a reciprocal single-stranded crossover between two homologous DNA duplexes (Holliday junction).. In terms of biological role, the RuvA-RuvB-RuvC complex processes Holliday junction (HJ) DNA during genetic recombination and DNA repair. Endonuclease that resolves HJ intermediates. Cleaves cruciform DNA by making single-stranded nicks across the HJ at symmetrical positions within the homologous arms, yielding a 5'-phosphate and a 3'-hydroxyl group; requires a central core of homology in the junction. The consensus cleavage sequence is 5'-(A/T)TT(C/G)-3'. Cleavage occurs on the 3'-side of the TT dinucleotide at the point of strand exchange. HJ branch migration catalyzed by RuvA-RuvB allows RuvC to scan DNA until it finds its consensus sequence, where it cleaves and resolves the cruciform DNA. The sequence is that of Crossover junction endodeoxyribonuclease RuvC from Ralstonia nicotianae (strain ATCC BAA-1114 / GMI1000) (Ralstonia solanacearum).